The primary structure comprises 603 residues: Membrane protein insertase YidC (603 aa).

Residues 7–27 (FFITIALSVLILAVWQYFYVL) traverse the membrane as a helical segment. The span at 38-51 (RVEQQRVEEQKKAA) shows a compositional bias: basic and acidic residues. Positions 38–76 (RVEQQRVEEQKKAAEAANPGAGTPAPAPGTIPNAPGGDT) are disordered. Positions 52–74 (EAANPGAGTPAPAPGTIPNAPGG) are enriched in low complexity. A run of 5 helical transmembrane segments spans residues 352–372 (FDLLIDWGWFHFITKPMFWLI), 378–398 (FLGNFGLAILATTVIVKALFF), 452–472 (WPVALQIPVFFSLYKVLYITI), 497–517 (LFGLIPVTLPHMLMIGVWPLI), and 540–560 (IFTWMPVIFTFMMAGFPAGLV).

This sequence belongs to the OXA1/ALB3/YidC family. Type 1 subfamily. Interacts with the Sec translocase complex via SecD. Specifically interacts with transmembrane segments of nascent integral membrane proteins during membrane integration.

It localises to the cell inner membrane. In terms of biological role, required for the insertion and/or proper folding and/or complex formation of integral membrane proteins into the membrane. Involved in integration of membrane proteins that insert both dependently and independently of the Sec translocase complex, as well as at least some lipoproteins. Aids folding of multispanning membrane proteins. The protein is Membrane protein insertase YidC of Mesorhizobium japonicum (strain LMG 29417 / CECT 9101 / MAFF 303099) (Mesorhizobium loti (strain MAFF 303099)).